The primary structure comprises 290 residues: Probable transcriptional regulatory protein HAH1 (290 aa).

The protein belongs to the TACO1 family.

It localises to the mitochondrion. The sequence is that of Probable transcriptional regulatory protein HAH1 from Saccharomyces cerevisiae (strain ATCC 204508 / S288c) (Baker's yeast).